The following is a 295-amino-acid chain: Probable protein phosphatase 2C 6 (295 aa).

Positions 23-294 (QYAATHMQGW…DNMTCILIQF (272 aa)) constitute a PPM-type phosphatase domain. Mn(2+)-binding residues include Asp-57, Gly-58, Asp-237, and Asp-285.

It belongs to the PP2C family. Mg(2+) is required as a cofactor. Requires Mn(2+) as cofactor.

It is found in the membrane. The catalysed reaction is O-phospho-L-seryl-[protein] + H2O = L-seryl-[protein] + phosphate. It carries out the reaction O-phospho-L-threonyl-[protein] + H2O = L-threonyl-[protein] + phosphate. Functionally, enzyme with a broad specificity. The sequence is that of Probable protein phosphatase 2C 6 from Paramecium tetraurelia.